Here is a 257-residue protein sequence, read N- to C-terminus: Electron transfer flavoprotein subunit beta (257 aa).

This sequence belongs to the ETF beta-subunit/FixA family. Heterodimer of an alpha and a beta subunit. FAD serves as cofactor. The cofactor is AMP.

In terms of biological role, the electron transfer flavoprotein serves as a specific electron acceptor for other dehydrogenases. It transfers the electrons to the main respiratory chain via ETF-ubiquinone oxidoreductase (ETF dehydrogenase). The chain is Electron transfer flavoprotein subunit beta (etfB) from Bacillus subtilis (strain 168).